The following is a 23-amino-acid chain: Aldehyde dehydrogenase (23 aa).

It belongs to the aldehyde dehydrogenase family.

The catalysed reaction is an aldehyde + NAD(+) + H2O = a carboxylate + NADH + 2 H(+). The protein is Aldehyde dehydrogenase of Moraxella sp. (strain TAE123).